Here is a 180-residue protein sequence, read N- to C-terminus: Non-specific lipid transfer protein GPI-anchored 3 (180 aa).

The first 22 residues, 1 to 22 (MEAVRFAVAVVLVFCYVTSSNA), serve as a signal peptide directing secretion. 4 cysteine pairs are disulfide-bonded: Cys-41–Cys-78, Cys-48–Cys-62, Cys-63–Cys-104, and Cys-76–Cys-113. 2 N-linked (GlcNAc...) asparagine glycosylation sites follow: Asn-91 and Asn-120. Composition is skewed to low complexity over residues 116–125 (SAGTNSSSTP) and 133–156 (PASS…TAKP). Residues 116–156 (SAGTNSSSTPPATPKTPPASSTSTGTGSGSTGNAAPSTAKP) are disordered. Ser-158 carries the GPI-anchor amidated serine lipid modification. Positions 159–180 (SAPAINFGGLSFASAVVATLFF) are cleaved as a propeptide — removed in mature form.

This sequence belongs to the plant LTP family. In terms of tissue distribution, restricted to stamen, pollen and sporophytic tissues. Also detected, at low levels, in stems and leaves.

It is found in the cell membrane. Lipid transfer protein involved in seed and ovule maturation and development, probably by regulating the fatty acids homeostasis during suberin and sporopollenin biosynthesis or deposition. In Arabidopsis thaliana (Mouse-ear cress), this protein is Non-specific lipid transfer protein GPI-anchored 3.